A 358-amino-acid chain; its full sequence is Cyanide hydratase (358 aa).

The region spanning 8 to 287 is the CN hydrolase domain; the sequence is YKAAAVNAEP…QGLLFVDIDL (280 aa). Glutamate 48 serves as the catalytic Proton acceptor. The active site involves lysine 130. Cysteine 165 acts as the Nucleophile in catalysis.

It belongs to the carbon-nitrogen hydrolase superfamily. Nitrilase family. In terms of assembly, oligomer of dimers, forming left-handed helical fibers.

It catalyses the reaction formamide = hydrogen cyanide + H2O. Functionally, catalyzes the hydration of cyanide to formamide. Degradation of cyanide may be important for plant pathogenic fungi in infection of cyanogenic plants. This is Cyanide hydratase from Penicillium rubens (strain ATCC 28089 / DSM 1075 / NRRL 1951 / Wisconsin 54-1255) (Penicillium chrysogenum).